The sequence spans 139 residues: MEVPAAWKKFRYRGKTLEELLEMPLDDFIELLPARQRRSLKRGFNDAQRRLLEKVLKARKEMEKGKKVKIRTHVRDMVILPIMVGLTIEVYNGKEFVPVKIVPEMIGHYLGEFSHTTAVVKHGEPGLKATRSSLFVAAK.

The protein belongs to the universal ribosomal protein uS19 family.

Protein S19 forms a complex with S13 that binds strongly to the 16S ribosomal RNA. The sequence is that of Small ribosomal subunit protein uS19 from Ignicoccus hospitalis (strain KIN4/I / DSM 18386 / JCM 14125).